The sequence spans 953 residues: Translation initiation factor IF-2 (953 aa).

Disordered stretches follow at residues 48-248 (SSFS…AELA) and 279-363 (TKLK…TERK). Basic and acidic residues-rich tracts occupy residues 80-89 (TGSEHAEKTQ), 98-111 (FKAEREARAKEQAA), and 140-188 (QGDK…ENHK). The span at 191 to 207 (RFTNQKKQGRQEPQSKS) shows a compositional bias: polar residues. Residues 229–248 (RQSETRFRAQQEAKRLAELA) are compositionally biased toward basic and acidic residues. Residues 282–291 (KSSNISAKST) show a composition bias toward polar residues. The segment covering 300-317 (ARPEKNRELTHHSQEGQK) has biased composition (basic and acidic residues). The span at 322–338 (SWNSQNQVRNQKNSNWN) shows a compositional bias: low complexity. A compositionally biased stretch (basic residues) spans 339–348 (KNKKTKKGKN). The tr-type G domain occupies 454-623 (ERAPVVTIMG…LLVAEVEELK (170 aa)). A G1 region spans residues 463-470 (GHVDHGKT). 463–470 (GHVDHGKT) is a binding site for GTP. The G2 stretch occupies residues 488–492 (GITQH). Positions 509–512 (DTPG) are G3. GTP is bound by residues 509-513 (DTPGH) and 563-566 (NKID). The segment at 563-566 (NKID) is G4. Positions 599–601 (SAK) are G5.

This sequence belongs to the TRAFAC class translation factor GTPase superfamily. Classic translation factor GTPase family. IF-2 subfamily.

It localises to the cytoplasm. Functionally, one of the essential components for the initiation of protein synthesis. Protects formylmethionyl-tRNA from spontaneous hydrolysis and promotes its binding to the 30S ribosomal subunits. Also involved in the hydrolysis of GTP during the formation of the 70S ribosomal complex. This chain is Translation initiation factor IF-2, found in Streptococcus pyogenes serotype M18 (strain MGAS8232).